The chain runs to 1591 residues: Rho guanine nucleotide exchange factor TIAM1 (1591 aa).

The interval 1-70 (MGNAESQNVD…TPSIPQSLAE (70 aa)) is disordered. Residue G2 is the site of N-myristoyl glycine attachment. Positions 8–19 (NVDHEFYGEKHA) are enriched in basic and acidic residues. The segment covering 20–49 (SLGRKHTSRSLRLSHKTRRTRHASSGKAIH) has biased composition (basic residues). Over residues 53–67 (EVSTRSSSTPSIPQS) the composition is skewed to low complexity. Residues S231, S356, and S358 each carry the phosphoserine modification. 2 disordered regions span residues 305–380 (QISL…DRAR) and 393–422 (MSTT…SPGQ). Positions 340 to 359 (TTDTDLLSRRSNATNSSYSP) are enriched in polar residues. Positions 367-376 (GSDSGSSSTG) are enriched in low complexity. Over residues 412–422 (QSSGTLSSPGQ) the composition is skewed to polar residues. Positions 434-549 (VRKAGALAVK…TAIHSACAAA (116 aa)) constitute a PH 1 domain. S695 carries the post-translational modification Phosphoserine. One can recognise an RBD domain in the interval 765-832 (TPSWFCLPNN…QPEEDIYELL (68 aa)). Y829 carries the phosphotyrosine; by NTRK2 modification. Residues 845-908 (NIHIEKSDAA…NNRAAGTLNS (64 aa)) enclose the PDZ domain. Positions 933 to 1034 (GVELLENPPH…TSPQLATTRQ (102 aa)) are disordered. Polar residues predominate over residues 958–975 (LTSNPGHSLSSEQGSSAE). Positions 977–990 (APEEGEGPDLESSD) are enriched in acidic residues. A compositionally biased stretch (low complexity) spans 1014-1028 (PSDSSPSPQDATSPQ). A DH domain is found at 1040-1234 (KLRKVICELL…NKVASHINEM (195 aa)). Positions 1261–1397 (DLSMGDLLLH…KSVHSILRDK (137 aa)) constitute a PH 2 domain. Y1323 is modified (phosphotyrosine). Residues K1404 and K1420 each participate in a glycyl lysine isopeptide (Lys-Gly) (interchain with G-Cter in ubiquitin) cross-link. The interval 1456 to 1481 (TIDSDAISASSPEKEPQQPAGGGDTD) is disordered. S1519 is modified (phosphoserine).

Belongs to the TIAM family. As to quaternary structure, component of the Par polarity complex, composed of at least phosphorylated PRKCZ, PARD3 and TIAM1. Interacts with BAIAP2. Interacts (via PDZ domain) with CNTNAP4, SDC1 and SDC3 (via C-terminus). Interacts with CD44, PARD3 and MAPK8IP2. Interacts with EPHA8; regulates clathrin-mediated endocytosis of EPHA8. Interacts with NTRK2; mediates the activation of RAC1 by BDNF. Post-translationally, ubiquitinated. Undergoes 'Lys-48' ubiquitination at Lys-1404 and Lys-1420 by a CUL3(KBTBD6/7) E3 ubiquitin ligase complex composed of CUL3, RBX1, KBTBD6 and KBTBD7. 'Lys-48' ubiquitination at Lys-1404 and Lys-1420 triggers proteasomal degradation. Ubiquitination at Lys-1404 and Lys-1420 by CUL3(KBTBD6/7) also requires the membrane-associated protein GABARAP and may therefore be spatially restricted within the cell. As to expression, highly expressed in brain and testis and at low or moderate levels in almost all other normal tissues. Found in virtually all analyzed tumor cell lines including B- and T-lymphomas, neuroblastomas, melanomas and carcinomas.

The protein resides in the cell junction. It is found in the cell membrane. Functionally, guanyl-nucleotide exchange factor that activates RHO-like proteins and connects extracellular signals to cytoskeletal activities. Activates RAC1, CDC42, and to a lesser extent RHOA and their downstream signaling to regulate processes like cell adhesion and cell migration. The protein is Rho guanine nucleotide exchange factor TIAM1 of Mus musculus (Mouse).